Here is a 352-residue protein sequence, read N- to C-terminus: Biotin synthase (352 aa).

The Radical SAM core domain maps to 44 to 262 (NRVQVSTLLS…LAVARILMPK (219 aa)). 3 residues coordinate [4Fe-4S] cluster: Cys59, Cys63, and Cys66. Positions 103, 134, 194, and 266 each coordinate [2Fe-2S] cluster.

Belongs to the radical SAM superfamily. Biotin synthase family. In terms of assembly, homodimer. [4Fe-4S] cluster is required as a cofactor. The cofactor is [2Fe-2S] cluster.

The catalysed reaction is (4R,5S)-dethiobiotin + (sulfur carrier)-SH + 2 reduced [2Fe-2S]-[ferredoxin] + 2 S-adenosyl-L-methionine = (sulfur carrier)-H + biotin + 2 5'-deoxyadenosine + 2 L-methionine + 2 oxidized [2Fe-2S]-[ferredoxin]. The protein operates within cofactor biosynthesis; biotin biosynthesis; biotin from 7,8-diaminononanoate: step 2/2. In terms of biological role, catalyzes the conversion of dethiobiotin (DTB) to biotin by the insertion of a sulfur atom into dethiobiotin via a radical-based mechanism. The protein is Biotin synthase of Pseudomonas putida (strain ATCC 47054 / DSM 6125 / CFBP 8728 / NCIMB 11950 / KT2440).